The following is a 319-amino-acid chain: N-acyl-aromatic-L-amino acid amidohydrolase (carboxylate-forming) (319 aa).

Residues 1–210 (MCSLPGSRKP…SILDFIELFN (210 aa)) form a hydrolytic domain region. Residues H21 and E24 each coordinate Zn(2+). Residues R63 and 70–71 (NR) contribute to the substrate site. H116 is a binding site for Zn(2+). Positions 178 and 288 each coordinate substrate. The tract at residues 211–318 (QGMEFPAFEM…PGLTPSSTQT (108 aa)) is shielding domain. Position 318 is a phosphothreonine (T318).

This sequence belongs to the AspA/AstE family. Aspartoacylase subfamily. In terms of assembly, exists as a mixture of homodimers and homotetramer, both catalytically active. It depends on Zn(2+) as a cofactor.

It is found in the apical cell membrane. Its subcellular location is the cytoplasm. It catalyses the reaction an N-acyl-aromatic L-alpha-amino acid + H2O = an aromatic L-alpha-amino acid + a carboxylate. The enzyme catalyses an N-acetyl-L-cysteine-S-conjugate + H2O = an S-substituted L-cysteine + acetate. Functionally, plays an important role in deacetylating mercapturic acids in kidney proximal tubules. Also acts on N-acetyl-aromatic amino acids. This chain is N-acyl-aromatic-L-amino acid amidohydrolase (carboxylate-forming) (Acy3), found in Rattus norvegicus (Rat).